The sequence spans 688 residues: Glycine--tRNA ligase beta subunit (688 aa).

It belongs to the class-II aminoacyl-tRNA synthetase family. Tetramer of two alpha and two beta subunits.

It is found in the cytoplasm. The catalysed reaction is tRNA(Gly) + glycine + ATP = glycyl-tRNA(Gly) + AMP + diphosphate. This is Glycine--tRNA ligase beta subunit from Vibrio atlanticus (strain LGP32) (Vibrio splendidus (strain Mel32)).